A 598-amino-acid polypeptide reads, in one-letter code: Acetylcholine receptor subunit alpha-type acr-5 (598 aa).

The signal sequence occupies residues 1–16; that stretch reads MLPNIILILLIRYCSC. The Extracellular portion of the chain corresponds to 17 to 323; that stretch reads GAGSRVYEKY…HLVIRRKPLY (307 aa). Residues Asn54, Asn71, Asn77, Asn134, Asn178, and Asn252 are each glycosylated (N-linked (GlcNAc...) asparagine). The chain crosses the membrane as a helical span at residues 324-344; that stretch reads YMINLVVPTSIITIVAVTGFF. At 345–356 the chain is on the cytoplasmic side; sequence TPTSSSSERDEK. Residues 357–377 traverse the membrane as a helical segment; it reads LYLGINTLLTMSVMMLMVCNQ. Topologically, residues 378 to 391 are extracellular; it reads MPSTSTYVPLMSWY. A helical membrane pass occupies residues 392–412; sequence YIGIIMVIVVGTFLATGVLAI. Over 413-563 the chain is Cytoplasmic; the sequence is HGQKHYNKPI…WEFLANVLDR (151 aa). A helical membrane pass occupies residues 564–584; it reads ILLTIFCGFTFAVFIILIGFD. Over 585–598 the chain is Extracellular; it reads SFFTFHTDSPPKTM.

It belongs to the ligand-gated ion channel (TC 1.A.9) family. Acetylcholine receptor (TC 1.A.9.1) subfamily.

It is found in the postsynaptic cell membrane. The protein resides in the cell membrane. Subunit of nicotinic acetylcholine receptor (nAChR). Involved in nAChR sensitivity to nicotine. Modulates locomotion towards the drug nicotine. In Caenorhabditis elegans, this protein is Acetylcholine receptor subunit alpha-type acr-5.